We begin with the raw amino-acid sequence, 470 residues long: 3-isopropylmalate dehydratase large subunit (470 aa).

3 residues coordinate [4Fe-4S] cluster: C351, C411, and C414.

The protein belongs to the aconitase/IPM isomerase family. LeuC type 1 subfamily. Heterodimer of LeuC and LeuD. [4Fe-4S] cluster serves as cofactor.

The enzyme catalyses (2R,3S)-3-isopropylmalate = (2S)-2-isopropylmalate. The protein operates within amino-acid biosynthesis; L-leucine biosynthesis; L-leucine from 3-methyl-2-oxobutanoate: step 2/4. Functionally, catalyzes the isomerization between 2-isopropylmalate and 3-isopropylmalate, via the formation of 2-isopropylmaleate. This chain is 3-isopropylmalate dehydratase large subunit, found in Rhodopseudomonas palustris (strain BisB5).